A 381-amino-acid chain; its full sequence is 2-(3-amino-3-carboxypropyl)histidine synthase subunit 1 (381 aa).

[4Fe-4S] cluster-binding residues include C106, C209, and C344.

The protein belongs to the DPH1/DPH2 family. DPH1 subfamily. In terms of assembly, component of the 2-(3-amino-3-carboxypropyl)histidine synthase complex composed of dph1, dph2, dph3 and a NADH-dependent reductase. [4Fe-4S] cluster is required as a cofactor.

The protein localises to the nucleus. It localises to the cytoplasm. It catalyses the reaction L-histidyl-[translation elongation factor 2] + S-adenosyl-L-methionine = 2-[(3S)-amino-3-carboxypropyl]-L-histidyl-[translation elongation factor 2] + S-methyl-5'-thioadenosine + H(+). It participates in protein modification; peptidyl-diphthamide biosynthesis. Catalyzes the first step of diphthamide biosynthesis, a post-translational modification of histidine which occurs in elongation factor 2. Dph1 and dph2 transfer a 3-amino-3-carboxypropyl (ACP) group from S-adenosyl-L-methionine (SAM) to a histidine residue, the reaction is assisted by a reduction system comprising dph3 and a NADH-dependent reductase. The chain is 2-(3-amino-3-carboxypropyl)histidine synthase subunit 1 (dph1) from Danio rerio (Zebrafish).